The chain runs to 102 residues: Large ribosomal subunit protein bL21 (102 aa).

This sequence belongs to the bacterial ribosomal protein bL21 family. As to quaternary structure, part of the 50S ribosomal subunit. Contacts protein L20.

In terms of biological role, this protein binds to 23S rRNA in the presence of protein L20. The chain is Large ribosomal subunit protein bL21 from Nitratiruptor sp. (strain SB155-2).